A 300-amino-acid polypeptide reads, in one-letter code: GTPase Era (300 aa).

The Era-type G domain occupies 6–173 (KSGFVAIVGR…MDVLVEQMPE (168 aa)). The segment at 14–21 (GRPNVGKS) is G1. Residue 14-21 (GRPNVGKS) participates in GTP binding. The interval 40–44 (QTTRN) is G2. The interval 61–64 (DTPG) is G3. GTP-binding positions include 61–65 (DTPGI) and 123–126 (NKID). The G4 stretch occupies residues 123 to 126 (NKID). Residues 152–154 (ISA) form a G5 region. Residues 204-281 (TRDEIPHSVA…YLELWVKVQK (78 aa)) form the KH type-2 domain.

Belongs to the TRAFAC class TrmE-Era-EngA-EngB-Septin-like GTPase superfamily. Era GTPase family. In terms of assembly, monomer.

Its subcellular location is the cytoplasm. The protein resides in the cell membrane. An essential GTPase that binds both GDP and GTP, with rapid nucleotide exchange. Plays a role in 16S rRNA processing and 30S ribosomal subunit biogenesis and possibly also in cell cycle regulation and energy metabolism. In Enterococcus faecalis (strain ATCC 700802 / V583), this protein is GTPase Era.